Reading from the N-terminus, the 247-residue chain is HTH-type transcriptional regulator SarU (247 aa).

2 DNA-binding regions (H-T-H motif) span residues leucine 53 to lysine 76 and leucine 178 to asparagine 201.

This sequence belongs to the SarA family.

It is found in the cytoplasm. Functionally, positive regulator of RNAII and RNAIII in a cell density-dependent manner. It can contribute to the expression of virulence genes controlled by agr. May also regulate target genes via an agr-independent pathway. This chain is HTH-type transcriptional regulator SarU (sarU), found in Staphylococcus aureus (strain COL).